A 166-amino-acid polypeptide reads, in one-letter code: Large ribosomal subunit protein uL11x (166 aa).

Belongs to the universal ribosomal protein uL11 family.

Functionally, binds directly to 26S ribosomal RNA. In Arabidopsis thaliana (Mouse-ear cress), this protein is Large ribosomal subunit protein uL11x (RPL12C).